The chain runs to 97 residues: Putative defensin-like protein 227 (97 aa).

The N-terminal stretch at 1 to 26 is a signal peptide; that stretch reads MKWATLFMVSCVLMFFVMNNINEVES. 4 disulfide bridges follow: Cys35-Cys97, Cys45-Cys76, Cys53-Cys91, and Cys74-Cys93.

Belongs to the DEFL family.

It is found in the secreted. The chain is Putative defensin-like protein 227 (SCRL28) from Arabidopsis thaliana (Mouse-ear cress).